The chain runs to 206 residues: Large ribosomal subunit protein eL8 (206 aa).

This sequence belongs to the eukaryotic ribosomal protein eL8 family. As to quaternary structure, component of the large ribosomal subunit.

The protein resides in the cytoplasm. The chain is Large ribosomal subunit protein eL8 (RPL7A) from Encephalitozoon cuniculi (strain GB-M1) (Microsporidian parasite).